The sequence spans 425 residues: MQFENTREFAKKLDNEDKISKYRDEFIFPKVNGKDVIYFVGNSLGLQPKTARKYVDEVMKDWAELAVEGHFYAEKSWWDYHERFSEKLARVVGANPSEVTVMNTLTVNLHLLMVSFYRPSGKRYKIICEEKAFPSDQYMISSQVRFHGYEPSDAIVEIMKREGENNFRTEDILKKIEEVGEECALVLIGGVNYYTGQVFDMETITKAGHDIGAFVGWDLAHGAGNIELKLSEWNVDFAAWCSYKYMNSGPGNASGCFINKKYHNKKDIPRFEGWWGHNKERRFLMEPEFQPEPTADAWQISNAPILALAPYLASLEMFDEVGMPALIEKRNKIVAYLEFVLHEIDEEVDSSFEIITPADQNERGTQLSVFLHGEGKELFRYLMDQGVITDWREPNVIRLAPAPFYCSFEDMYEFGQILKKGILSK.

Pyridoxal 5'-phosphate-binding positions include leucine 105, threonine 106, 133–136 (FPSD), aspartate 218, histidine 221, and tyrosine 243. Lysine 244 is modified (N6-(pyridoxal phosphate)lysine). Pyridoxal 5'-phosphate-binding residues include tryptophan 274 and asparagine 302.

This sequence belongs to the kynureninase family. Homodimer. It depends on pyridoxal 5'-phosphate as a cofactor.

The enzyme catalyses L-kynurenine + H2O = anthranilate + L-alanine + H(+). It catalyses the reaction 3-hydroxy-L-kynurenine + H2O = 3-hydroxyanthranilate + L-alanine + H(+). The protein operates within amino-acid degradation; L-kynurenine degradation; L-alanine and anthranilate from L-kynurenine: step 1/1. Its pathway is cofactor biosynthesis; NAD(+) biosynthesis; quinolinate from L-kynurenine: step 2/3. Its function is as follows. Catalyzes the cleavage of L-kynurenine (L-Kyn) and L-3-hydroxykynurenine (L-3OHKyn) into anthranilic acid (AA) and 3-hydroxyanthranilic acid (3-OHAA), respectively. This Christiangramia forsetii (strain DSM 17595 / CGMCC 1.15422 / KT0803) (Gramella forsetii) protein is Kynureninase.